Reading from the N-terminus, the 219-residue chain is Large ribosomal subunit protein uL1 (219 aa).

It belongs to the universal ribosomal protein uL1 family. As to quaternary structure, part of the 50S ribosomal subunit.

Its function is as follows. Binds directly to 23S rRNA. Probably involved in E site tRNA release. Functionally, protein L1 is also a translational repressor protein, it controls the translation of its operon by binding to its mRNA. This Pyrococcus abyssi (strain GE5 / Orsay) protein is Large ribosomal subunit protein uL1.